We begin with the raw amino-acid sequence, 441 residues long: Ribosomal protein uS12 methylthiotransferase RimO (441 aa).

One can recognise an MTTase N-terminal domain in the interval 8–118 (PKIGFVSLGC…VLQHVHHYVP (111 aa)). C17, C53, C82, C150, C154, and C157 together coordinate [4Fe-4S] cluster. The 238-residue stretch at 136–373 (LTPRHYAYLK…MALQQQISAE (238 aa)) folds into the Radical SAM core domain. Positions 376–441 (QEKVGREILV…DEYDLWGSLV (66 aa)) constitute a TRAM domain.

The protein belongs to the methylthiotransferase family. RimO subfamily. Requires [4Fe-4S] cluster as cofactor.

The protein localises to the cytoplasm. It catalyses the reaction L-aspartate(89)-[ribosomal protein uS12]-hydrogen + (sulfur carrier)-SH + AH2 + 2 S-adenosyl-L-methionine = 3-methylsulfanyl-L-aspartate(89)-[ribosomal protein uS12]-hydrogen + (sulfur carrier)-H + 5'-deoxyadenosine + L-methionine + A + S-adenosyl-L-homocysteine + 2 H(+). Functionally, catalyzes the methylthiolation of an aspartic acid residue of ribosomal protein uS12. The polypeptide is Ribosomal protein uS12 methylthiotransferase RimO (Cronobacter sakazakii (strain ATCC BAA-894) (Enterobacter sakazakii)).